We begin with the raw amino-acid sequence, 208 residues long: Ras-related protein M-Ras (208 aa).

GTP is bound by residues Asp-21, Gly-22, Gly-23, Val-24, Gly-25, Lys-26, Ser-27, Ala-28, Phe-38, Val-39, Pro-40, Tyr-42, Pro-44, and Thr-45. Residue Ser-27 coordinates Mg(2+). An Effector region motif is present at residues 42–50 (YDPTIEDSY). The Mg(2+) site is built by Thr-45 and Asp-67. Positions 70, 126, 127, 129, 156, 157, and 158 each coordinate GTP. Cysteine methyl ester is present on Cys-205. Cys-205 carries the S-geranylgeranyl cysteine lipid modification. A propeptide spans 206-208 (VIL) (removed in mature form).

It belongs to the small GTPase superfamily. Ras family. As to quaternary structure, component of the SHOC2-MRAS-PP1c (SMP) holophosphatase complex consisting of SHOC2, GTP-bound M-Ras/MRAS and the catalytic subunit of protein phosphatase 1 (either PPP1CA, PPP1CB or PPP1CC). Interacts (active GTP-bound form) with both SHOC2 and PP1c (all isoforms) to form a tertiary complex; SHOC2 and PP1c preferably bind M-Ras/MRAS, but they also bind K-Ras/KRAS, N-Ras/NRAS and H-Ras/HRAS. Interacts with RGL3. Interacts (active GTP-bound form preferentially) with RGS14. The cofactor is Mg(2+). Expression highly restricted to the brain and heart.

It localises to the cell membrane. It carries out the reaction GTP + H2O = GDP + phosphate + H(+). Signal transducer in the Ras-MAPK signaling pathway that regulates cell proliferation and survival. Core component of the SHOC2-MRAS-PP1c (SMP) holophosphatase complex that regulates the MAPK pathway activation. The formation of the SMP complex only occurs when MRAS is GTP-bound. MRAS has low intrinsic GTPase activity and may require additional factors for activation. The SMP complex specifically dephosphorylates the inhibitory phosphorylation at 'Ser-259' of RAF1 kinase, 'Ser-365' of BRAF kinase and 'Ser-214' of ARAF kinase, stimulating their kinase activities. The polypeptide is Ras-related protein M-Ras (MRAS) (Homo sapiens (Human)).